Reading from the N-terminus, the 210-residue chain is Orotate phosphoribosyltransferase (210 aa).

5-phospho-alpha-D-ribose 1-diphosphate contacts are provided by residues Arg-96, Lys-100, His-102, and 122–130; that span reads EDLISTGGS. Ser-126 is a binding site for orotate.

The protein belongs to the purine/pyrimidine phosphoribosyltransferase family. PyrE subfamily. In terms of assembly, homodimer. Requires Mg(2+) as cofactor.

The catalysed reaction is orotidine 5'-phosphate + diphosphate = orotate + 5-phospho-alpha-D-ribose 1-diphosphate. Its pathway is pyrimidine metabolism; UMP biosynthesis via de novo pathway; UMP from orotate: step 1/2. Its function is as follows. Catalyzes the transfer of a ribosyl phosphate group from 5-phosphoribose 1-diphosphate to orotate, leading to the formation of orotidine monophosphate (OMP). The protein is Orotate phosphoribosyltransferase of Streptococcus pneumoniae serotype 4 (strain ATCC BAA-334 / TIGR4).